The following is a 550-amino-acid chain: Sterol O-acyltransferase 1 (550 aa).

N-acetylmethionine is present on methionine 1. Residues 1 to 36 (MVGEEKMSLRNRLSKSRENPEEDEDQRKPAKESLEA) form a disordered region. Residues 1-138 (MVGEEKMSLR…LDELLEVDHI (138 aa)) lie on the Cytoplasmic side of the membrane. Serine 8 carries the post-translational modification Phosphoserine. Over residues 15-34 (KSRENPEEDEDQRKPAKESL) the composition is skewed to basic and acidic residues. Histidine 137 contributes to the cholesterol binding site. Residues 139–160 (RTIYHMFIALLILFILSTLVVD) traverse the membrane as a helical segment. Over 161–180 (YIDEGRLVLEFSLLSYAFGK) the chain is Lumenal. The helical transmembrane segment at 181-206 (FPTVVWTWWIMFLSTFSVPYFLFQRW) threads the bilayer. Residues 207–218 (ATGYSKSSHPLI) are Cytoplasmic-facing. Residues 219–244 (NSLFHGFLFMVFQIGILGFGPTYVVL) form a helical membrane-spanning segment. Topologically, residues 245-252 (AYTLPPAS) are lumenal. The helical transmembrane segment at 253–276 (RFIIIFEQIRFVMKAHSFVRENVP) threads the bilayer. Over 277-319 (RVLNSAKEKSSTVPIPTVNQYLYFLFAPTLIYRDSYPRNPTVR) the chain is Cytoplasmic. Residues 320–352 (WGYVAMQFAQVFGCFFYVYYIFERLCAPLFRNI) traverse the membrane as a helical segment. The Lumenal portion of the chain corresponds to 353–369 (KQEPFSARVLVLCVFNS). Residues 370–395 (ILPGVLILFLTFFAFLHCWLNAFAEM) form a helical membrane-spanning segment. The Cytoplasmic portion of the chain corresponds to 396–443 (LRFGDRMFYKDWWNSTSYSNYYRTWNVVVHDWLYYYAYKDFLWFFSKR). The FYXDWWN motif motif lies at 403–409 (FYKDWWN). Residues asparagine 415, arginine 418, asparagine 421, histidine 425, tyrosine 433, lysine 445, and serine 456 each contribute to the an acyl-CoA site. The helical transmembrane segment at 444–468 (FKSAAMLAVFAVSAVVHEYALAVCL) threads the bilayer. Histidine 460 is an active-site residue. The Lumenal segment spans residues 469–474 (SFFYPV). A helical membrane pass occupies residues 475–490 (LFVLFMFFGMAFNFIV). The Cytoplasmic segment spans residues 491–496 (NDSRKK). Residues 497–528 (PIWNVMMWTSLFLGNGVLLCFYSQEWYARQHC) traverse the membrane as a helical segment. Cysteine 528 and cysteine 546 are oxidised to a cystine. Residues 529–550 (PLKNPTFLDYVRPRSWTCRYVF) are Lumenal-facing.

It belongs to the membrane-bound acyltransferase family. Sterol o-acyltransferase subfamily. In terms of assembly, may form homo- or heterodimers. Interacts with UBIAD1. In terms of tissue distribution, expressed in most tissues, but most strongly in the adrenal gland. Expressed more strongly in liver Kupffer cells than in hepatocytes.

The protein resides in the endoplasmic reticulum membrane. It carries out the reaction a sterol + a long-chain fatty acyl-CoA = a long-chain 3-hydroxysterol ester + CoA. The enzyme catalyses cholesterol + an acyl-CoA = a cholesterol ester + CoA. It catalyses the reaction cholesterol + (9Z)-octadecenoyl-CoA = cholesteryl (9Z-octadecenoate) + CoA. The catalysed reaction is cholesterol + hexadecanoyl-CoA = cholesteryl hexadecanoate + CoA. It carries out the reaction octadecanoyl-CoA + cholesterol = cholesteryl octadecanoate + CoA. The enzyme catalyses (9Z,12Z)-octadecadienoyl-CoA + cholesterol = cholesteryl (9Z,12Z)-octadecadienoate + CoA. It catalyses the reaction (5Z,8Z,11Z,14Z)-eicosatetraenoyl-CoA + cholesterol = cholesteryl (5Z,8Z,11Z,14Z)-eicosatetraenoate + CoA. The catalysed reaction is (9Z)-hexadecenoyl-CoA + cholesterol = cholesteryl (9Z)-hexadecenoate + CoA. It carries out the reaction (11Z)-octadecenoyl-CoA + cholesterol = cholesteryl (11Z)-octadecenoate + CoA. The enzyme catalyses (7Z)-octadecenoyl-CoA + cholesterol = cholesteryl (7Z)-octadecenoate + CoA. Functionally, catalyzes the formation of fatty acid-cholesterol esters, which are less soluble in membranes than cholesterol. Plays a role in lipoprotein assembly and dietary cholesterol absorption. Preferentially utilizes oleoyl-CoA ((9Z)-octadecenoyl-CoA) as a substrate: shows a higher activity towards an acyl-CoA substrate with a double bond at the delta-9 position (9Z) than towards saturated acyl-CoA or an unsaturated acyl-CoA with a double bond at the delta-7 (7Z) or delta-11 (11Z) positions. This Chlorocebus aethiops (Green monkey) protein is Sterol O-acyltransferase 1 (SOAT1).